A 119-amino-acid polypeptide reads, in one-letter code: Large ribosomal subunit protein bL20 (119 aa).

The protein belongs to the bacterial ribosomal protein bL20 family.

Functionally, binds directly to 23S ribosomal RNA and is necessary for the in vitro assembly process of the 50S ribosomal subunit. It is not involved in the protein synthesizing functions of that subunit. The sequence is that of Large ribosomal subunit protein bL20 from Streptococcus agalactiae serotype Ia (strain ATCC 27591 / A909 / CDC SS700).